Consider the following 295-residue polypeptide: UDP-N-acetylenolpyruvoylglucosamine reductase (295 aa).

Positions 27–194 constitute an FAD-binding PCMH-type domain; sequence GVGGEAEVWF…TRVRLKLRRS (168 aa). Arg174 is an active-site residue. Catalysis depends on Cys221, which acts as the Proton donor. Glu287 is an active-site residue.

It belongs to the MurB family. FAD serves as cofactor.

Its subcellular location is the cytoplasm. It catalyses the reaction UDP-N-acetyl-alpha-D-muramate + NADP(+) = UDP-N-acetyl-3-O-(1-carboxyvinyl)-alpha-D-glucosamine + NADPH + H(+). It participates in cell wall biogenesis; peptidoglycan biosynthesis. Cell wall formation. The protein is UDP-N-acetylenolpyruvoylglucosamine reductase of Deinococcus geothermalis (strain DSM 11300 / CIP 105573 / AG-3a).